The chain runs to 483 residues: Kynureninase 1 (483 aa).

Pyridoxal 5'-phosphate-binding positions include Leu-147, Thr-148, Phe-175 to Asp-178, Ser-232, Asp-261, His-264, and Tyr-286. An N6-(pyridoxal phosphate)lysine modification is found at Lys-287. 2 residues coordinate pyridoxal 5'-phosphate: Trp-326 and Asn-354.

Belongs to the kynureninase family. In terms of assembly, homodimer. It depends on pyridoxal 5'-phosphate as a cofactor.

It localises to the cytoplasm. It carries out the reaction L-kynurenine + H2O = anthranilate + L-alanine + H(+). The enzyme catalyses 3-hydroxy-L-kynurenine + H2O = 3-hydroxyanthranilate + L-alanine + H(+). It functions in the pathway amino-acid degradation; L-kynurenine degradation; L-alanine and anthranilate from L-kynurenine: step 1/1. Its pathway is cofactor biosynthesis; NAD(+) biosynthesis; quinolinate from L-kynurenine: step 2/3. Catalyzes the cleavage of L-kynurenine (L-Kyn) and L-3-hydroxykynurenine (L-3OHKyn) into anthranilic acid (AA) and 3-hydroxyanthranilic acid (3-OHAA), respectively. This Aspergillus terreus (strain NIH 2624 / FGSC A1156) protein is Kynureninase 1 (bna5-1).